We begin with the raw amino-acid sequence, 420 residues long: Glucose-1-phosphate adenylyltransferase (420 aa).

Alpha-D-glucose 1-phosphate is bound by residues Y107, G173, 188–189 (EK), and S206.

The protein belongs to the bacterial/plant glucose-1-phosphate adenylyltransferase family. As to quaternary structure, homotetramer.

The enzyme catalyses alpha-D-glucose 1-phosphate + ATP + H(+) = ADP-alpha-D-glucose + diphosphate. Its pathway is glycan biosynthesis; glycogen biosynthesis. Involved in the biosynthesis of ADP-glucose, a building block required for the elongation reactions to produce glycogen. Catalyzes the reaction between ATP and alpha-D-glucose 1-phosphate (G1P) to produce pyrophosphate and ADP-Glc. The protein is Glucose-1-phosphate adenylyltransferase of Shewanella sp. (strain W3-18-1).